Consider the following 115-residue polypeptide: Parathyroid hormone (115 aa).

A signal peptide spans 1–25; that stretch reads MMSANTVAKVMIIMLAVCLLTQTDG. Residues 26 to 31 constitute a propeptide that is removed on maturation; the sequence is KPVRKR. Residues 51–69 are important for receptor binding; the sequence is RMQWLRRKLQDMHNFVSLG.

The protein belongs to the parathyroid hormone family. As to quaternary structure, interacts with PTH1R (via N-terminal extracellular domain). In terms of tissue distribution, highly expressed in the parathyroid gland. Also expressed in the placenta, thymus and testis.

The protein localises to the secreted. In terms of biological role, parathyroid hormone elevates calcium level by dissolving the salts in bone and preventing their renal excretion. Acts by binding to its receptor, PTH1R, activating G protein-coupled receptor signaling. Stimulates [1-14C]-2-deoxy-D-glucose (2DG) transport and glycogen synthesis in osteoblastic cells. The polypeptide is Parathyroid hormone (Mus musculus (Mouse)).